Here is a 2140-residue protein sequence, read N- to C-terminus: Dedicator of cytokinesis protein 7 (2140 aa).

Phosphoserine is present on residues Ser-30, Ser-180, and Ser-182. The tract at residues 138–183 (FNPNTLDKQKERQKGLPKQVFESDEAPDGNSYQDDQDDLKRRSMSI) is disordered. Residues 365–395 (FKEADATKNKEKLEKLKSQADQFCQRLGKYR) are a coiled coil. An N6-methyllysine modification is found at Lys-381. At Thr-450 the chain carries Phosphothreonine. Ser-452 is subject to Phosphoserine. The C2 DOCK-type domain occupies 561 to 727 (RNLLYIYPQS…GVFNVEVVAV (167 aa)). A phosphoserine mark is found at Ser-862, Ser-864, Ser-882, Ser-888, Ser-896, Ser-900, and Ser-905. A compositionally biased stretch (low complexity) spans 888 to 901 (SLNLNRSRSLSNSN). A disordered region spans residues 888–971 (SLNLNRSRSL…MSSHTETSSF (84 aa)). Residues Thr-907 and Thr-909 each carry the phosphothreonine modification. Phosphoserine occurs at positions 910, 929, 964, 1383, 1390, 1394, 1398, 1421, 1425, 1429, 1430, 1432, 1434, and 1438. The span at 943–971 (SNPSPSAESTQAMDRSCNRMSSHTETSSF) shows a compositional bias: polar residues. The DOCKER domain occupies 1678-2114 (KGYQTSPDLR…LQPLINRKIP (437 aa)). Residue Lys-1962 is modified to N6-acetyllysine. A coiled-coil region spans residues 2086–2112 (DQKEYQRELERNYHRLKEALQPLINRK). Ser-2129 is modified (phosphoserine).

It belongs to the DOCK family. As to quaternary structure, component of the DOCK7-induced septin displacement/DISP complex, at least composed of DOCK7, LRCH3 and MYO6. Interacts with TSC1. Interacts with nucleotide-free RAC1 and RAC3. Interacts with TACC3 and CRY1. Interacts with NOD2. In terms of tissue distribution, widely expressed.

It is found in the cell projection. It localises to the axon. Its function is as follows. Functions as a guanine nucleotide exchange factor (GEF), which activates Rac1 and Rac3 Rho small GTPases by exchanging bound GDP for free GTP. Does not have a GEF activity for CDC42. Required for STMN1 'Ser-15' phosphorylation during axon formation and consequently for neuronal polarization. As part of the DISP complex, may regulate the association of septins with actin and thereby regulate the actin cytoskeleton. Has a role in pigmentation. Involved in the regulation of cortical neurogenesis through the control of radial glial cells (RGCs) proliferation versus differentiation; negatively regulates the basal-to-apical interkinetic nuclear migration of RGCs by antagonizing the microtubule growth-promoting function of TACC3. The chain is Dedicator of cytokinesis protein 7 (DOCK7) from Homo sapiens (Human).